Consider the following 255-residue polypeptide: Hydroxylmethylpyrimidine kinase (255 aa).

Pyridoxal 5'-phosphate-binding residues include glycine 18, glutamine 43, and asparagine 110. Glutamine 43 serves as a coordination point for 4-amino-5-hydroxymethyl-2-methylpyrimidine. Residues cysteine 195 and cysteine 207 are joined by a disulfide bond. Serine 208 serves as a coordination point for pyridoxal 5'-phosphate.

The protein belongs to the ThiD family. Homodimer. Crystals show a disulfide bond between Cys-195 and Cys-207. This disulfide is possibly an artifact of the purification and crystallization conditions. However, as it is adjacent to the conserved GSGC of the oxyanion hole, this disulfide may help to orient the backbone amides toward the oxanion intermediate.

The enzyme catalyses 4-amino-5-hydroxymethyl-2-methylpyrimidine + ATP = 4-amino-2-methyl-5-(phosphooxymethyl)pyrimidine + ADP + H(+). It participates in cofactor biosynthesis; thiamine diphosphate biosynthesis. With respect to regulation, inhibited by pyridoxal phosphate at high micromolar concentrations. Catalyzes the phosphorylation of hydroxymethylpyrimidine (HMP) to hydroxymethylpyrimidine phosphate (HMP-P). Unlike other HMPKs, it cannot catalyze the phosphorylation of HMP-P to generate the diphosphate HMP-PP. Shows no activity with pyridoxal, pyridoxamine or pyridoxine. Does not show phosphatase activity. This chain is Hydroxylmethylpyrimidine kinase, found in Acinetobacter baumannii (strain IS-123).